Here is a 91-residue protein sequence, read N- to C-terminus: C-C motif chemokine 5 (91 aa).

The signal sequence occupies residues 1-23 (MKISAAVLTVVLMAASLCAPASA). 2 disulfide bridges follow: cysteine 33-cysteine 57 and cysteine 34-cysteine 73.

The protein belongs to the intercrine beta (chemokine CC) family.

It is found in the secreted. Functionally, chemoattractant for blood monocytes, memory T-helper cells and eosinophils. Causes the release of histamine from basophils and activates eosinophils. May activate several chemokine receptors including CCR1, CCR3, CCR4 and CCR5. May also be an agonist of the G protein-coupled receptor GPR75. Together with GPR75, may play a role in neuron survival through activation of a downstream signaling pathway involving the PI3, Akt and MAP kinases. By activating GPR75 may also play a role in insulin secretion by islet cells. This chain is C-C motif chemokine 5 (CCL5), found in Sigmodon hispidus (Hispid cotton rat).